Here is a 180-residue protein sequence, read N- to C-terminus: UPF0149 protein XC_0904 (180 aa).

Belongs to the UPF0149 family.

This chain is UPF0149 protein XC_0904, found in Xanthomonas campestris pv. campestris (strain 8004).